The primary structure comprises 326 residues: 4-hydroxythreonine-4-phosphate dehydrogenase (326 aa).

Positions 132 and 133 each coordinate substrate. The a divalent metal cation site is built by H163, H208, and H263. 3 residues coordinate substrate: K271, N280, and R289.

This sequence belongs to the PdxA family. In terms of assembly, homodimer. The cofactor is Zn(2+). Mg(2+) is required as a cofactor. Requires Co(2+) as cofactor.

It localises to the cytoplasm. The catalysed reaction is 4-(phosphooxy)-L-threonine + NAD(+) = 3-amino-2-oxopropyl phosphate + CO2 + NADH. It functions in the pathway cofactor biosynthesis; pyridoxine 5'-phosphate biosynthesis; pyridoxine 5'-phosphate from D-erythrose 4-phosphate: step 4/5. Functionally, catalyzes the NAD(P)-dependent oxidation of 4-(phosphooxy)-L-threonine (HTP) into 2-amino-3-oxo-4-(phosphooxy)butyric acid which spontaneously decarboxylates to form 3-amino-2-oxopropyl phosphate (AHAP). The polypeptide is 4-hydroxythreonine-4-phosphate dehydrogenase (Roseobacter denitrificans (strain ATCC 33942 / OCh 114) (Erythrobacter sp. (strain OCh 114))).